We begin with the raw amino-acid sequence, 206 residues long: Large ribosomal subunit protein uL4 (206 aa).

Residues 49-79 (KVKTRSEISRTTKKMYKQKGTGNARHGAASA) are disordered.

This sequence belongs to the universal ribosomal protein uL4 family. Part of the 50S ribosomal subunit.

One of the primary rRNA binding proteins, this protein initially binds near the 5'-end of the 23S rRNA. It is important during the early stages of 50S assembly. It makes multiple contacts with different domains of the 23S rRNA in the assembled 50S subunit and ribosome. Functionally, forms part of the polypeptide exit tunnel. The sequence is that of Large ribosomal subunit protein uL4 from Methylobacterium sp. (strain 4-46).